A 286-amino-acid chain; its full sequence is Beta-lactamase SHV-2 (286 aa).

Residues Met1–Ala21 form the signal peptide. The Acyl-ester intermediate role is filled by Ser66. Residues Cys73 and Cys119 are joined by a disulfide bond. The active-site Proton acceptor is Glu164. Substrate is bound at residue Lys230–Gly232.

The protein belongs to the class-A beta-lactamase family.

The catalysed reaction is a beta-lactam + H2O = a substituted beta-amino acid. This enzyme hydrolyzes cefotaxime, ceftazidime and other broad spectrum cephalosporins. The chain is Beta-lactamase SHV-2 (bla) from Escherichia coli.